Here is a 310-residue protein sequence, read N- to C-terminus: Light-independent protochlorophyllide reductase iron-sulfur ATP-binding protein (310 aa).

ATP is bound by residues 53–58 (GIGKST) and Lys-82. Position 57 (Ser-57) interacts with Mg(2+). The [4Fe-4S] cluster site is built by Cys-138 and Cys-172. Residues 223 to 224 (NR) and 247 to 249 (PAL) each bind ATP.

It belongs to the NifH/BchL/ChlL family. In terms of assembly, homodimer. Protochlorophyllide reductase is composed of three subunits; BchL, BchN and BchB. [4Fe-4S] cluster serves as cofactor.

The enzyme catalyses chlorophyllide a + oxidized 2[4Fe-4S]-[ferredoxin] + 2 ADP + 2 phosphate = protochlorophyllide a + reduced 2[4Fe-4S]-[ferredoxin] + 2 ATP + 2 H2O. It functions in the pathway porphyrin-containing compound metabolism; bacteriochlorophyll biosynthesis (light-independent). Component of the dark-operative protochlorophyllide reductase (DPOR) that uses Mg-ATP and reduced ferredoxin to reduce ring D of protochlorophyllide (Pchlide) to form chlorophyllide a (Chlide). This reaction is light-independent. The L component serves as a unique electron donor to the NB-component of the complex, and binds Mg-ATP. The polypeptide is Light-independent protochlorophyllide reductase iron-sulfur ATP-binding protein (Rhodopseudomonas palustris (strain BisA53)).